The sequence spans 1371 residues: Probable serine/threonine-protein kinase DDB_G0293292 (1371 aa).

Protein kinase domains lie at 9–269 and 1131–1371; these read NKIL…HPNT and FKEV…QPTL. ATP-binding positions include 15-23 and Lys39; that span reads IDDGNTKRK. Asp143 acts as the Proton acceptor in catalysis.

It belongs to the protein kinase superfamily. Ser/Thr protein kinase family.

It catalyses the reaction L-seryl-[protein] + ATP = O-phospho-L-seryl-[protein] + ADP + H(+). It carries out the reaction L-threonyl-[protein] + ATP = O-phospho-L-threonyl-[protein] + ADP + H(+). The protein is Probable serine/threonine-protein kinase DDB_G0293292 of Dictyostelium discoideum (Social amoeba).